A 95-amino-acid polypeptide reads, in one-letter code: Aspartyl/glutamyl-tRNA(Asn/Gln) amidotransferase subunit C (95 aa).

It belongs to the GatC family. In terms of assembly, heterotrimer of A, B and C subunits.

The catalysed reaction is L-glutamyl-tRNA(Gln) + L-glutamine + ATP + H2O = L-glutaminyl-tRNA(Gln) + L-glutamate + ADP + phosphate + H(+). The enzyme catalyses L-aspartyl-tRNA(Asn) + L-glutamine + ATP + H2O = L-asparaginyl-tRNA(Asn) + L-glutamate + ADP + phosphate + 2 H(+). Functionally, allows the formation of correctly charged Asn-tRNA(Asn) or Gln-tRNA(Gln) through the transamidation of misacylated Asp-tRNA(Asn) or Glu-tRNA(Gln) in organisms which lack either or both of asparaginyl-tRNA or glutaminyl-tRNA synthetases. The reaction takes place in the presence of glutamine and ATP through an activated phospho-Asp-tRNA(Asn) or phospho-Glu-tRNA(Gln). This Ruegeria pomeroyi (strain ATCC 700808 / DSM 15171 / DSS-3) (Silicibacter pomeroyi) protein is Aspartyl/glutamyl-tRNA(Asn/Gln) amidotransferase subunit C.